The sequence spans 144 residues: 3-hydroxyacyl-[acyl-carrier-protein] dehydratase FabZ (144 aa).

His51 is an active-site residue.

Belongs to the thioester dehydratase family. FabZ subfamily.

It is found in the cytoplasm. It carries out the reaction a (3R)-hydroxyacyl-[ACP] = a (2E)-enoyl-[ACP] + H2O. In terms of biological role, involved in unsaturated fatty acids biosynthesis. Catalyzes the dehydration of short chain beta-hydroxyacyl-ACPs and long chain saturated and unsaturated beta-hydroxyacyl-ACPs. The protein is 3-hydroxyacyl-[acyl-carrier-protein] dehydratase FabZ of Clostridium botulinum (strain Langeland / NCTC 10281 / Type F).